The primary structure comprises 195 residues: Endoribonuclease YbeY (195 aa).

Zn(2+)-binding residues include His-153, His-157, and His-163.

This sequence belongs to the endoribonuclease YbeY family. Requires Zn(2+) as cofactor.

It localises to the cytoplasm. Its function is as follows. Single strand-specific metallo-endoribonuclease involved in late-stage 70S ribosome quality control and in maturation of the 3' terminus of the 16S rRNA. In Prochlorococcus marinus (strain SARG / CCMP1375 / SS120), this protein is Endoribonuclease YbeY.